The primary structure comprises 168 residues: Photosystem I assembly protein Ycf3 (168 aa).

TPR repeat units follow at residues 35 to 68, 72 to 105, and 120 to 153; these read AFTY…EMDP, SYIL…NPFL, and GEQA…TPGN.

Belongs to the Ycf3 family.

It localises to the plastid. It is found in the chloroplast thylakoid membrane. Functionally, essential for the assembly of the photosystem I (PSI) complex. May act as a chaperone-like factor to guide the assembly of the PSI subunits. The sequence is that of Photosystem I assembly protein Ycf3 from Pelargonium hortorum (Common geranium).